Reading from the N-terminus, the 84-residue chain is Acetylcholine receptor subunit alpha (84 aa).

2 cysteine pairs are disulfide-bonded: Cys7-Cys21 and Cys71-Cys72. Asn20 carries an N-linked (GlcNAc...) asparagine glycan.

Belongs to the ligand-gated ion channel (TC 1.A.9) family. Acetylcholine receptor (TC 1.A.9.1) subfamily. Alpha-1/CHRNA1 sub-subfamily. In terms of assembly, one of the alpha chains that assemble within the acetylcholine receptor, a pentamer of two alpha chains, a beta, a delta, and a gamma (in immature muscle) or epsilon (in mature muscle) chains. The muscle heteropentamer composed of alpha-1, beta-1, delta, epsilon subunits interacts with the alpha-conotoxin ImII.

The protein localises to the postsynaptic cell membrane. The protein resides in the cell membrane. It catalyses the reaction K(+)(in) = K(+)(out). The enzyme catalyses Na(+)(in) = Na(+)(out). In terms of biological role, upon acetylcholine binding, the AChR responds by an extensive change in conformation that affects all subunits and leads to opening of an ion-conducting channel across the plasma membrane. The polypeptide is Acetylcholine receptor subunit alpha (CHRNA1) (Felis catus (Cat)).